Reading from the N-terminus, the 40-residue chain is Large ribosomal subunit protein bL36B (40 aa).

Belongs to the bacterial ribosomal protein bL36 family.

The protein is Large ribosomal subunit protein bL36B of Arthrobacter sp. (strain FB24).